A 226-amino-acid polypeptide reads, in one-letter code: Ribonuclease 3 (226 aa).

The region spanning 7–129 (LPRLCRTLGY…IIGAIYLDSD (123 aa)) is the RNase III domain. Glu-42 serves as a coordination point for Mg(2+). Asp-46 is an active-site residue. 2 residues coordinate Mg(2+): Asp-115 and Glu-118. Glu-118 is an active-site residue. The DRBM domain occupies 156 to 226 (DAKTLLQEYL…AAQVLELLKK (71 aa)).

This sequence belongs to the ribonuclease III family. Homodimer. The cofactor is Mg(2+).

It localises to the cytoplasm. The enzyme catalyses Endonucleolytic cleavage to 5'-phosphomonoester.. Digests double-stranded RNA. Involved in the processing of primary rRNA transcript to yield the immediate precursors to the large and small rRNAs (23S and 16S). Processes some mRNAs, and tRNAs when they are encoded in the rRNA operon. Processes pre-crRNA and tracrRNA of type II CRISPR loci if present in the organism. This is Ribonuclease 3 from Shewanella sp. (strain ANA-3).